We begin with the raw amino-acid sequence, 225 residues long: Enolase-phosphatase E1 (225 aa).

It belongs to the HAD-like hydrolase superfamily. MasA/MtnC family. As to quaternary structure, monomer. The cofactor is Mg(2+).

The catalysed reaction is 5-methylsulfanyl-2,3-dioxopentyl phosphate + H2O = 1,2-dihydroxy-5-(methylsulfanyl)pent-1-en-3-one + phosphate. The protein operates within amino-acid biosynthesis; L-methionine biosynthesis via salvage pathway; L-methionine from S-methyl-5-thio-alpha-D-ribose 1-phosphate: step 3/6. It functions in the pathway amino-acid biosynthesis; L-methionine biosynthesis via salvage pathway; L-methionine from S-methyl-5-thio-alpha-D-ribose 1-phosphate: step 4/6. Functionally, bifunctional enzyme that catalyzes the enolization of 2,3-diketo-5-methylthiopentyl-1-phosphate (DK-MTP-1-P) into the intermediate 2-hydroxy-3-keto-5-methylthiopentenyl-1-phosphate (HK-MTPenyl-1-P), which is then dephosphorylated to form the acireductone 1,2-dihydroxy-3-keto-5-methylthiopentene (DHK-MTPene). The polypeptide is Enolase-phosphatase E1 (Pseudomonas aeruginosa (strain LESB58)).